We begin with the raw amino-acid sequence, 393 residues long: Formate-dependent phosphoribosylglycinamide formyltransferase (393 aa).

N(1)-(5-phospho-beta-D-ribosyl)glycinamide contacts are provided by residues 22–23 and Glu-82; that span reads EL. Residues Arg-114, Lys-155, 160-165, 195-198, and Glu-203 each bind ATP; these read SSGKGQ and EGFI. The region spanning 119–308 is the ATP-grasp domain; the sequence is RLAAEELKLP…QFALHARAIL (190 aa). 2 residues coordinate Mg(2+): Glu-267 and Glu-279. N(1)-(5-phospho-beta-D-ribosyl)glycinamide contacts are provided by residues Asp-286, Lys-356, and 363–364; that span reads RR.

Belongs to the PurK/PurT family. Homodimer.

The enzyme catalyses N(1)-(5-phospho-beta-D-ribosyl)glycinamide + formate + ATP = N(2)-formyl-N(1)-(5-phospho-beta-D-ribosyl)glycinamide + ADP + phosphate + H(+). It participates in purine metabolism; IMP biosynthesis via de novo pathway; N(2)-formyl-N(1)-(5-phospho-D-ribosyl)glycinamide from N(1)-(5-phospho-D-ribosyl)glycinamide (formate route): step 1/1. Functionally, involved in the de novo purine biosynthesis. Catalyzes the transfer of formate to 5-phospho-ribosyl-glycinamide (GAR), producing 5-phospho-ribosyl-N-formylglycinamide (FGAR). Formate is provided by PurU via hydrolysis of 10-formyl-tetrahydrofolate. The sequence is that of Formate-dependent phosphoribosylglycinamide formyltransferase from Pseudomonas syringae pv. tomato (strain ATCC BAA-871 / DC3000).